The following is a 506-amino-acid chain: Lysine--tRNA ligase (506 aa).

Positions 416 and 423 each coordinate Mg(2+).

Belongs to the class-II aminoacyl-tRNA synthetase family. As to quaternary structure, homodimer. Mg(2+) is required as a cofactor.

The protein resides in the cytoplasm. It catalyses the reaction tRNA(Lys) + L-lysine + ATP = L-lysyl-tRNA(Lys) + AMP + diphosphate. The protein is Lysine--tRNA ligase of Xylella fastidiosa (strain M12).